The chain runs to 227 residues: Terpene cyclase ltmB (227 aa).

7 consecutive transmembrane segments (helical) span residues 20-40 (LAET…VLMI), 51-71 (MALI…IIYP), 76-96 (VELA…TSAA), 113-133 (AGLI…ALAM), 135-155 (IGPA…LSIG), 173-195 (LWSS…WRYW), and 206-226 (LILW…VCLL).

Belongs to the paxB family.

It localises to the membrane. Its pathway is secondary metabolite biosynthesis. In terms of biological role, terpene cyclase; part of the gene cluster that mediates the biosynthesis of lolitrems, indole-diterpene mycotoxins that are potent tremorgens in mammals, and are synthesized by clavicipitaceous fungal endophytes in association with their grass hosts. The geranylgeranyl diphosphate (GGPP) synthase ltmG is proposed to catalyze the first step in lolitrem biosynthesis. LtmG catalyzes a series of iterative condensations of isopentenyl diphosphate (IPP) with dimethylallyl diphosphate (DMAPP), geranyl diphosphate (GPP), and farnesyl diphosphate (FPP), to form GGPP. GGPP then condenses with indole-3-glycerol phosphate to form 3-geranylgeranylindole, an acyclic intermediate, to be incorporated into paxilline. Either ltmG or ltmC could be responsible for this step, as both are putative prenyl transferases. The FAD-dependent monooxygenase ltmM then catalyzes the epoxidation of the two terminal alkenes of the geranylgeranyl moiety, which is subsequently cyclized by ltmB, to paspaline. The cytochrome P450 monooxygenases ltmQ and ltmP can sequentially oxidize paspaline to terpendole E and terpendole F. Alternatively, ltmP converts paspaline to an intermediate which is oxidized by ltmQ to terpendole F. LtmF, ltmK, ltmE and ltmJ appear to be unique to the epichloe endophytes. The prenyltransferase ltmF is involved in the 27-hydroxyl-O-prenylation. The cytochrome P450 monooxygenase ltmK is required for the oxidative acetal ring formation. The multi-functional prenyltransferase ltmE is required for C20- and C21-prenylations of the indole ring of paspalanes and acts together with the cytochrome P450 monooxygenase ltmJ to yield lolitremanes by multiple oxidations and ring closures. The stereoisomer pairs of lolitriol and lolitrem N or lolitrem B and lolitrem F may be attributed to variations in the way in which ring closure can occur under the action of ltmJ. While the major product of this pathway is lolitrem B, the prenyl transferases and cytochrome P450 monooxygenases identified in this pathway have a remarkable versatility in their regio- and stereo-specificities to generate a diverse range of metabolites that are products of a metabolic grid rather than a linear pathway. The protein is Terpene cyclase ltmB of Epichloe festucae var. lolii (Neotyphodium lolii).